Here is an 85-residue protein sequence, read N- to C-terminus: MKTFVFIVLVALAFVLTAAKEERANPSELVSALAELVMLDAERGVDKPGCRYLFGGCKSDDDCCPRLGCKGKGHDYCAWDGTFSD.

Positions 1–19 (MKTFVFIVLVALAFVLTAA) are cleaved as a signal peptide. Positions 20 to 43 (KEERANPSELVSALAELVMLDAER) are excised as a propeptide. Intrachain disulfides connect Cys-50–Cys-64, Cys-57–Cys-69, and Cys-63–Cys-77.

The protein belongs to the neurotoxin 10 (Hwtx-1) family. Expressed by the venom gland.

The protein resides in the secreted. Functionally, multimodal toxin that enhances nociceptor excitability mainly by the simultaneous stimulation of repetitive firing (through Nav1.8/SCN10A channel current enhancement) and impairment of repolarization (by inhibiting delayed rectifier current of Kv2.1/KCNB1), with a potential contribution from tetrodotoxin-sensitive voltage-gated sodium channels (Nav) modified excitability. Enhances Nav1.8/SCN10A currents (EC(50)=1.1 uM), modifies the channel gating by a right-shift in steady-state inactivation and delays open-state inactivation. Also decreases Kv2.1/KCNB1 currents (IC(50)=0.43 uM) and causes a depolarizing shift in the voltage dependence of activation without change in steady-state inactivation. In addition, inhibits peak currents of human sodium channels (Nav1.1 to Nav1.7, IC(50)=0.38-2.3 uM) and delays fast inactivation of Nav1.1/SCN1A, Nav1.3/SCN3A, Nav1.6/SCN8A, and Nav1.7/SCN9A. In small dorsal root ganglion neurons, induces hyperexcitability by enhancing tetrodotoxin-resistant sodium currents, impairing repolarization and lowering the threshold of action potential firing, consistent with the severe pain associated with envenomation. In vivo, elicits nocifensive behavior in mice after intraplantar injection. This Pelinobius muticus (King baboon spider) protein is Delta/kappa-theraphotoxin-Pm1a.